Consider the following 88-residue polypeptide: UPF0250 protein Shewmr4_0986 (88 aa).

This sequence belongs to the UPF0250 family.

The polypeptide is UPF0250 protein Shewmr4_0986 (Shewanella sp. (strain MR-4)).